A 318-amino-acid polypeptide reads, in one-letter code: Polyprenal reductase (318 aa).

Topologically, residues 1 to 19 (MAPWAAAQLWALNPLRALW) are cytoplasmic. A helical transmembrane segment spans residues 20 to 40 (LTLAAAFLLTLLLQLVPPGLL). Residues 41–80 (PGCALFQDLIRYGKTKREGQSRPAVCRVFDVPKRYFSHFY) lie on the Lumenal side of the membrane. A helical transmembrane segment spans residues 81–101 (IISALWNGFLLWHLTQSVFLG). Residues 102-119 (VPFPNWLHGLLRILGASQ) lie on the Cytoplasmic side of the membrane. Residues 120 to 140 (FQGGELALSAFLVLVFLWLHS) form a helical membrane-spanning segment. Over 141–156 (LRRLFECFYVSVFSNT) the chain is Lumenal. The chain crosses the membrane as a helical span at residues 157–177 (VIHIVQYCFGLVYYVLTGLTV). Residues 178-194 (LSQVPMDGRNAYVIGKN) are Cytoplasmic-facing. Residues 195-215 (LLMQARWFHILGMLMFIWSSV) form a helical membrane-spanning segment. At 216 to 265 (HQYKCHVILGNLRKNKAGVVIHCNHRIPFGDWFEYVSSPNYLAELMIYIS) the chain is on the lumenal side. Residues 266–286 (MAVTFGFHNLTWWLVVTYVFF) form a helical membrane-spanning segment. Topologically, residues 287 to 318 (SQALSAFLSHKFYKSKFVSYPKHRKAFLPFLF) are cytoplasmic.

Belongs to the steroid 5-alpha reductase family. Polyprenal reductase subfamily.

Its subcellular location is the endoplasmic reticulum membrane. It carries out the reaction a di-trans,poly-cis-dolichal + NADP(+) = a di-trans,poly-cis-polyprenal + NADPH + H(+). The enzyme catalyses a 3-oxo-5alpha-steroid + NADP(+) = a 3-oxo-Delta(4)-steroid + NADPH + H(+). The catalysed reaction is androst-4-ene-3,17-dione + NADPH + H(+) = 5alpha-androstan-3,17-dione + NADP(+). It catalyses the reaction 17beta-hydroxy-5alpha-androstan-3-one + NADP(+) = testosterone + NADPH + H(+). Its pathway is protein modification; protein glycosylation. Plays a key role in early steps of protein N-linked glycosylation by being involved in the conversion of polyprenol into dolichol. Acts as a polyprenal reductase that mediates the reduction of polyprenal into dolichal in a NADP-dependent mechanism. Dolichols are required for the synthesis of dolichol-linked monosaccharides and the oligosaccharide precursor used for N-glycosylation. Also able to convert testosterone (T) into 5-alpha-dihydrotestosterone (DHT). In Ailuropoda melanoleuca (Giant panda), this protein is Polyprenal reductase (SRD5A3).